A 1003-amino-acid chain; its full sequence is MGVPALFRWLSRKYPKIISPVVEDDVTQEIGAAQFSDPNPNGELDNLYLDMNGIVHPCSHPEHKLPPETEDEMFLDVFKYTDRVLLMARPRKVLMIAVDGVAPRAKMNQQRSRRFRSAQDAKIAHEEKERQIRERESRGESIDDAIKGKKSWDSNAITPGTPFMDSLAQALRYWVAYKLATDPGWANLQVIISDATVPGEGEHKLMSFIRSQRSDPEYDPNTKHCIYGLDADLIFLGLATHEPHFRVLREDVFANQSRQMRISDQLSMTQDQKDSIAEQDAKKPFLWLHVNVLREYLEIELYNPHLSFPFDLERAIDDWVFMCFFVGNDFLPHLPSLDVRDNGIDILVNCWKRMLPKLRDYITCDGNLNLESVEKLLSSLSYKEDEIFRKRHEGEKRREENDKRRKLAQEEEKALKNQYIPQVSKGSDKAPLTADINMPLLSTSGDAVEGYAQLSNKDIVENRDVITKANMSNADAAAALKKLLDSKNNKESDKNVSASAAIQEQQNKSDINTTENSKKRPIDQVEAELPKPDENGDSVRMWEPGYRQRYYQSKFGVVSEEEINKIRRDMVRCYLEGISWVLLYYYQGCPSWQWYYPYHYAPFAADFVNINDIIGEQGIKFTLGEPFKPYEQLMSVLPAASGHNLPEVLRILMSDPSSEILDFYPEEFQIDMNGKKMSWQGIALLPFIDENRLLEALEKRYHLLTDDERERNTLKNEVLFISNQNKNYKRFYNELYDNNVKELKFRFSRSSLAGTVIKNEYFVPDGITKFPLSEGDMPDLNNIEFFQSSYKMPTKKMGKSMLINGYISHTRTLTQEDRDSILHGNQRNGGYNRFRTPNDNSGYVNKGPSGKEDYLIYSMRRGGYRAFMHNLKNQNQQHQQPVPMNAMANNSYDNQYNSYSNNNNYNNNYNGGYPNQSNNNYSNQNSYNNYSNQNSYNNYNNQNSYNNYNNRNNHGNYNNYNRYNNQGSNYDRQGQGNASSNRSGYIPAPNRTGNFRNRNGYNR.

Residues 107–145 form a disordered region; it reads MNQQRSRRFRSAQDAKIAHEEKERQIRERESRGESIDDA. Positions 117–145 are enriched in basic and acidic residues; the sequence is SAQDAKIAHEEKERQIRERESRGESIDDA. A coiled-coil region spans residues 389–419; it reads RKRHEGEKRREENDKRRKLAQEEEKALKNQY. The tract at residues 488-538 is disordered; sequence NNKESDKNVSASAAIQEQQNKSDINTTENSKKRPIDQVEAELPKPDENGDS. A compositionally biased stretch (polar residues) spans 495–515; sequence NVSASAAIQEQQNKSDINTTE. The span at 516–534 shows a compositional bias: basic and acidic residues; it reads NSKKRPIDQVEAELPKPDE. Residues 690 to 730 adopt a coiled-coil conformation; that stretch reads ENRLLEALEKRYHLLTDDERERNTLKNEVLFISNQNKNYKR. Disordered stretches follow at residues 821–847 and 874–1003; these read ILHGNQRNGGYNRFRTPNDNSGYVNKG and QNQQ…GYNR. A compositionally biased stretch (polar residues) spans 823–843; that stretch reads HGNQRNGGYNRFRTPNDNSGY. The span at 889-970 shows a compositional bias: low complexity; that stretch reads NNSYDNQYNS…NRYNNQGSNY (82 aa). Composition is skewed to polar residues over residues 971-983 and 991-1003; these read DRQGQGNASSNRS and RTGNFRNRNGYNR.

It belongs to the 5'-3' exonuclease family. XRN2/RAT1 subfamily. As to quaternary structure, interacts with RAI1; the interaction is direct, stabilizes RAT1 protein structure and may stimulate its exoribonuclease activity. The interaction also stimulates RAI1 pyrophosphohydrolase activity, probably by recruiting it to mRNA substrates.

The protein resides in the nucleus. Functionally, possesses 5'-&gt;3' exoribonuclease activity. Required for the processing of nuclear mRNA and rRNA precursors. May promote the termination of transcription by RNA polymerase II. Essential for vegetative cell growth and chromosome segregation. The sequence is that of 5'-3' exoribonuclease 2 (RAT1) from Debaryomyces hansenii (strain ATCC 36239 / CBS 767 / BCRC 21394 / JCM 1990 / NBRC 0083 / IGC 2968) (Yeast).